The primary structure comprises 87 residues: Alpha-elapitoxin-Ls2a (87 aa).

The N-terminal stretch at 1 to 21 (MKTLLLTLVVVTIVCLDLGYT) is a signal peptide. 5 disulfide bridges follow: Cys-24–Cys-41, Cys-34–Cys-62, Cys-47–Cys-51, Cys-66–Cys-77, and Cys-78–Cys-83.

This sequence belongs to the three-finger toxin family. Long-chain subfamily. Type II alpha-neurotoxin sub-subfamily. Expressed by the venom gland.

It is found in the secreted. Its function is as follows. Binds with high affinity to muscular (tested on Torpedo marmorata, Kd=1.6 nM) and neuronal (chimeric alpha-7/CHRNA7, Kd=3 nM) nicotinic acetylcholine receptor (nAChR) and inhibits acetylcholine from binding to the receptor, thereby impairing neuromuscular and neuronal transmission. Also shows a very weak inhibition on GABA(A) receptors. The toxin (10 uM) inhibits 83% of current in channels composed of alpha-1-beta-3-gamma-2 (GABRA1-GABRB3-GABRG2) subunits, 39% of current in channels composed of alpha-2-beta-2-gamma-2 (GABRA2-GABRB2-GABRG2) subunits, and 33% of current in channels composed of alpha-5-beta-2-gamma-2 (GABRA5-GABRB2-GABRG2) subunits. This chain is Alpha-elapitoxin-Ls2a, found in Laticauda semifasciata (Black-banded sea krait).